A 334-amino-acid chain; its full sequence is Heme A synthase (334 aa).

Helical transmembrane passes span 6-26, 93-113, 119-139, 154-174, and 189-209; these read ITRW…IGGI, GRIT…QGVI, LPYI…WYMV, LAFH…QLIK, and LIFS…GALV. H253 contributes to the heme binding site. 3 helical membrane passes run 255-275, 282-302, and 305-325; these read LGGF…FKVK, IAYF…ITIV, and VPII…SIII. Position 313 (H313) interacts with heme.

The protein belongs to the COX15/CtaA family. Type 2 subfamily. As to quaternary structure, interacts with CtaB. The cofactor is heme b.

Its subcellular location is the cell membrane. The catalysed reaction is Fe(II)-heme o + 2 A + H2O = Fe(II)-heme a + 2 AH2. The protein operates within porphyrin-containing compound metabolism; heme A biosynthesis; heme A from heme O: step 1/1. Functionally, catalyzes the conversion of heme O to heme A by two successive hydroxylations of the methyl group at C8. The first hydroxylation forms heme I, the second hydroxylation results in an unstable dihydroxymethyl group, which spontaneously dehydrates, resulting in the formyl group of heme A. The chain is Heme A synthase from Rickettsia prowazekii (strain Madrid E).